A 200-amino-acid chain; its full sequence is Small ribosomal subunit protein uS4 (200 aa).

The tract at residues 20-41 is disordered; that stretch reads TGTGKELDKRPYAPGQHGPNQR. An S4 RNA-binding domain is found at 92 to 152; sequence SRLDNLVYRL…EKSKNLDVVK (61 aa).

Belongs to the universal ribosomal protein uS4 family. In terms of assembly, part of the 30S ribosomal subunit. Contacts protein S5. The interaction surface between S4 and S5 is involved in control of translational fidelity.

In terms of biological role, one of the primary rRNA binding proteins, it binds directly to 16S rRNA where it nucleates assembly of the body of the 30S subunit. With S5 and S12 plays an important role in translational accuracy. In Oceanobacillus iheyensis (strain DSM 14371 / CIP 107618 / JCM 11309 / KCTC 3954 / HTE831), this protein is Small ribosomal subunit protein uS4.